Consider the following 139-residue polypeptide: MDIREIQAALPHRYPMLLVDRVLEVSDDHIVAIKNVTINEPFFNGHFPHYPVMPGVLIMEALAQTAGVLELSKEENKSKLVFYAGMDKVKFKKQVVPGDQLVMTATFIKRRGTIAVVEARAEVDGKLAASGTLTFACGQ.

Residue His46 is part of the active site.

This sequence belongs to the thioester dehydratase family. FabZ subfamily.

The protein resides in the cytoplasm. The enzyme catalyses a (3R)-hydroxyacyl-[ACP] = a (2E)-enoyl-[ACP] + H2O. Involved in unsaturated fatty acids biosynthesis. Catalyzes the dehydration of short chain beta-hydroxyacyl-ACPs and long chain saturated and unsaturated beta-hydroxyacyl-ACPs. The chain is 3-hydroxyacyl-[acyl-carrier-protein] dehydratase FabZ from Streptococcus pyogenes serotype M3 (strain ATCC BAA-595 / MGAS315).